The chain runs to 193 residues: Holliday junction branch migration complex subunit RuvA (193 aa).

A domain I region spans residues 1–64 (MIGRIAGTLI…EDAHLLYGFG (64 aa)). Positions 65–143 (TAAERETFRQ…ADLGTVPGGP (79 aa)) are domain II. Positions 144-151 (AVSDDAVD) are flexible linker. The domain III stretch occupies residues 151–193 (DVLNALLALGYSDKEAALAIKQVPAGTGVSEGIKLALKALSKG).

This sequence belongs to the RuvA family. Homotetramer. Forms an RuvA(8)-RuvB(12)-Holliday junction (HJ) complex. HJ DNA is sandwiched between 2 RuvA tetramers; dsDNA enters through RuvA and exits via RuvB. An RuvB hexamer assembles on each DNA strand where it exits the tetramer. Each RuvB hexamer is contacted by two RuvA subunits (via domain III) on 2 adjacent RuvB subunits; this complex drives branch migration. In the full resolvosome a probable DNA-RuvA(4)-RuvB(12)-RuvC(2) complex forms which resolves the HJ.

The protein resides in the cytoplasm. Functionally, the RuvA-RuvB-RuvC complex processes Holliday junction (HJ) DNA during genetic recombination and DNA repair, while the RuvA-RuvB complex plays an important role in the rescue of blocked DNA replication forks via replication fork reversal (RFR). RuvA specifically binds to HJ cruciform DNA, conferring on it an open structure. The RuvB hexamer acts as an ATP-dependent pump, pulling dsDNA into and through the RuvAB complex. HJ branch migration allows RuvC to scan DNA until it finds its consensus sequence, where it cleaves and resolves the cruciform DNA. The polypeptide is Holliday junction branch migration complex subunit RuvA (Ralstonia pickettii (strain 12J)).